We begin with the raw amino-acid sequence, 143 residues long: 3-hydroxyacyl-[acyl-carrier-protein] dehydratase FabZ (143 aa).

Residue histidine 48 is part of the active site.

This sequence belongs to the thioester dehydratase family. FabZ subfamily.

It localises to the cytoplasm. It carries out the reaction a (3R)-hydroxyacyl-[ACP] = a (2E)-enoyl-[ACP] + H2O. In terms of biological role, involved in unsaturated fatty acids biosynthesis. Catalyzes the dehydration of short chain beta-hydroxyacyl-ACPs and long chain saturated and unsaturated beta-hydroxyacyl-ACPs. This Roseiflexus castenholzii (strain DSM 13941 / HLO8) protein is 3-hydroxyacyl-[acyl-carrier-protein] dehydratase FabZ.